The primary structure comprises 481 residues: Zinc metalloproteinase/disintegrin (481 aa).

An N-terminal signal peptide occupies residues 1–20 (MIEVLLVTICLAVFPYQGSS). Positions 21–189 (IILESGNVND…KKASQLYLTP (169 aa)) are excised as a propeptide. Pyrrolidone carboxylic acid (Glu) is present on Glu-190. Positions 197-392 (RYIKLAIVVD…DNPQCILNAP (196 aa)) constitute a Peptidase M12B domain. An L-amino acid tripeptide is bound at residue 296–299 (RNTI). 3 cysteine pairs are disulfide-bonded: Cys-308–Cys-387, Cys-349–Cys-371, and Cys-351–Cys-354. His-333 is a Zn(2+) binding site. Residue Glu-334 is part of the active site. The Zn(2+) site is built by His-337 and His-343. Ser-357 provides a ligand contact to an L-amino acid tripeptide. A propeptide spanning residues 393-410 (LRTDTVSTPVSGNEFLEA) is cleaved from the precursor. Residues 400–481 (TPVSGNEFLE…ADCPRNGLYG (82 aa)) form the Disintegrin domain. 6 disulfide bridges follow: Cys-414–Cys-429, Cys-416–Cys-424, Cys-423–Cys-446, Cys-437–Cys-443, Cys-442–Cys-467, and Cys-455–Cys-474. The Cell attachment site motif lies at 459 to 461 (RGD).

The protein belongs to the venom metalloproteinase (M12B) family. P-II subfamily. P-IIa sub-subfamily. As to quaternary structure, monomer. It depends on Zn(2+) as a cofactor. Post-translationally, the N-terminus is blocked. As to expression, expressed by the venom gland.

The protein localises to the secreted. With respect to regulation, inhibited by EDTA and 1,10-phenanthroline. Is also inhibited by endogenous tripeptide inhibitors pyroGlu-Asn-Trp, pyroGlu-Gln-Trp, and pyroGlu-Lys-Trp. Potent fibrinogenolytic protease which cleaves mainly the Aalpha chain of fibrinogen (FGA) and slightly the Bbeta (FGB) and the gamma (FGG) chains. May possess hemorrhagic activity. Compared to other SVMP, the substrate-binding pocket is relatively shallow. Is less susceptible to tripeptide inhibitors than TM-1 (AC U3KRG1) and TM-2. Its function is as follows. Inhibits platelet aggregation induced by ADP, thrombin, platelet-activating factor and collagen. Acts by inhibiting fibrinogen interaction with platelet receptors GPIIb/GPIIIa (ITGA2B/ITGB3). The protein is Zinc metalloproteinase/disintegrin of Protobothrops mucrosquamatus (Taiwan habu).